We begin with the raw amino-acid sequence, 758 residues long: 5-methyltetrahydropteroyltriglutamate--homocysteine methyltransferase (758 aa).

5-methyltetrahydropteroyltri-L-glutamate contacts are provided by residues Arg-15–Lys-18 and Lys-114. Residues Ile-433–Ser-435 and Glu-486 each bind L-homocysteine. Residues Ile-433–Ser-435 and Glu-486 contribute to the L-methionine site. 5-methyltetrahydropteroyltri-L-glutamate-binding positions include Arg-517 to Cys-518 and Trp-563. Asp-601 contributes to the L-homocysteine binding site. Residue Asp-601 coordinates L-methionine. Glu-607 is a binding site for 5-methyltetrahydropteroyltri-L-glutamate. The Zn(2+) site is built by His-643, Cys-645, and Glu-667. His-696 (proton donor) is an active-site residue. Cys-728 serves as a coordination point for Zn(2+).

The protein belongs to the vitamin-B12 independent methionine synthase family. It depends on Zn(2+) as a cofactor.

It catalyses the reaction 5-methyltetrahydropteroyltri-L-glutamate + L-homocysteine = tetrahydropteroyltri-L-glutamate + L-methionine. The protein operates within amino-acid biosynthesis; L-methionine biosynthesis via de novo pathway; L-methionine from L-homocysteine (MetE route): step 1/1. Its function is as follows. Catalyzes the transfer of a methyl group from 5-methyltetrahydrofolate to homocysteine resulting in methionine formation. In Syntrophotalea carbinolica (strain DSM 2380 / NBRC 103641 / GraBd1) (Pelobacter carbinolicus), this protein is 5-methyltetrahydropteroyltriglutamate--homocysteine methyltransferase.